The following is a 291-amino-acid chain: ATP phosphoribosyltransferase (291 aa).

It belongs to the ATP phosphoribosyltransferase family. Long subfamily. The cofactor is Mg(2+).

The protein localises to the cytoplasm. The catalysed reaction is 1-(5-phospho-beta-D-ribosyl)-ATP + diphosphate = 5-phospho-alpha-D-ribose 1-diphosphate + ATP. It functions in the pathway amino-acid biosynthesis; L-histidine biosynthesis; L-histidine from 5-phospho-alpha-D-ribose 1-diphosphate: step 1/9. Its activity is regulated as follows. Feedback inhibited by histidine. In terms of biological role, catalyzes the condensation of ATP and 5-phosphoribose 1-diphosphate to form N'-(5'-phosphoribosyl)-ATP (PR-ATP). Has a crucial role in the pathway because the rate of histidine biosynthesis seems to be controlled primarily by regulation of HisG enzymatic activity. The protein is ATP phosphoribosyltransferase of Desulfosudis oleivorans (strain DSM 6200 / JCM 39069 / Hxd3) (Desulfococcus oleovorans).